A 590-amino-acid polypeptide reads, in one-letter code: Oligoendopeptidase F homolog (590 aa).

His381 lines the Zn(2+) pocket. The active site involves Glu382. Zn(2+) is bound by residues His385 and His388.

It belongs to the peptidase M3B family. Zn(2+) serves as cofactor.

This Borreliella burgdorferi (strain ATCC 35210 / DSM 4680 / CIP 102532 / B31) (Borrelia burgdorferi) protein is Oligoendopeptidase F homolog (pepF).